Reading from the N-terminus, the 35-residue chain is Antimicrobial peptide 3 (35 aa).

Residues G4–H35 form the Chitin-binding type-1 domain. Cystine bridges form between C7–C20, C14–C26, and C19–C33.

Contains 3 disulfide bonds. Expressed in leaf, flower, stem and seed with highest expression in leaf (at protein level).

Has antifungal activity against A.niger (IC(50)=5.4 uM), B.sorokiniana (IC(50)=2.0 uM), B.cinerea (IC(50)=1.6 uM), F.solani (IC(50)=3.7 uM) and A.alternata (IC(50)=5.0 uM). Binds chitin in vitro. Has no antibacterial activity at concentrations up to 10 uM. In Stellaria media (Common chickweed), this protein is Antimicrobial peptide 3.